The following is an 850-amino-acid chain: MEMNLLQKLCVVCSKCNEYAMELECLKYCDPNVLLAESTPFKRNAAAIVYLYRKIYPEVVAQNRTQSSLLTLYLEMLLKALHEDTALLDRALMAYSRQPDRAAFYRTVLRLDRCDRHHTVELQFTDNVRFSVSLATLNDIERFLCKMNYVYGILAPEAGLEVCAQLLELLRRLCGISPVARQEVYVEGTTCAQCYEELTIIPNQGRSLNKRLQGLLCNHIAVHRPSSQSDVNIQTVEQDLLDLTTRIPHLAGVLSALKSLFSSSSAYHSYIQEAEEALREYNLFTDIPERIYSLSDFTYWSRTSEVIVKRVGITIQQLNVYHQLCRALMNGISRHLYGEDVEDIFVLGEKALDGEERMFVGSVFAAPNRIIDLITSLSIQAFEDNPVFNKLHESNEMYTKIKHILEEIRRPLPDGTGGDGPEGEAIHLRGREAMSGTGTTLMTASNSSNSSTHSQRNNGGGGRARGGGKKVVGGGVNGQDGDGSENGLRVRNCDEHEALDLVDARSRIHNVTREVNVRKRAYLQKVSEVGYGKVIRCIKTQERLTSKLIDVNLVGPLCLDFISKLMNGFLYRSQYHQDQDVVDVGDQFTYDEHLYVVNNLIHKSLPVESLPLLGQQIYELCNGPLFTHCTDRYPLSHNVDMAYACDNAGVLPHVKDDLVKCAEGTVYPSEWMVVKYMGFFNFSDCQDLNVLQKEMWMHVRELVLSVALYNETFGKQLSIACLRDELHPDRDVILTYNKEWPLLLRHEGSLYKSKDLYLLLYRHLSRPDESGDVPTAPVAKPSTLTAAAAVSGVFREPDRPWLPSPYPSSSTAGVSRRVRATRKRPRRASSLLDLARDEHGIQDLVPGSLR.

A C3H1-type zinc finger spans residues 191 to 219; it reads CAQCYEELTIIPNQGRSLNKRLQGLLCNH. A disordered region spans residues 438–489; the sequence is GTTLMTASNSSNSSTHSQRNNGGGGRARGGGKKVVGGGVNGQDGDGSENGLR. The span at 439–457 shows a compositional bias: low complexity; it reads TTLMTASNSSNSSTHSQRN. Positions 458–481 are enriched in gly residues; that stretch reads NGGGGRARGGGKKVVGGGVNGQDG. 709 to 716 lines the ATP pocket; the sequence is YNETFGKQ. The segment at 801 to 831 is disordered; it reads WLPSPYPSSSTAGVSRRVRATRKRPRRASSL. Positions 816 to 827 are enriched in basic residues; sequence RRVRATRKRPRR. The Nuclear localization signal motif lies at 822–827; the sequence is RKRPRR.

Belongs to the herpesviridae TRM1 protein family. In terms of assembly, associates with TRM2 and TRM3 to form the tripartite terminase complex. Interacts with portal protein.

It localises to the host nucleus. In terms of biological role, component of the molecular motor that translocates viral genomic DNA in empty capsid during DNA packaging. Forms a tripartite terminase complex together with TRM2 and TRM3 in the host cytoplasm. Once the complex reaches the host nucleus, it interacts with the capsid portal vertex. This portal forms a ring in which genomic DNA is translocated into the capsid. TRM1 carries an endonuclease activity that plays an important role for the cleavage of concatemeric viral DNA into unit length genomes. This chain is Tripartite terminase subunit 1, found in Homo sapiens (Human).